The chain runs to 302 residues: 4-hydroxy-tetrahydrodipicolinate synthase (302 aa).

Residue Thr-55 participates in pyruvate binding. Tyr-144 acts as the Proton donor/acceptor in catalysis. Lys-172 serves as the catalytic Schiff-base intermediate with substrate. Residue Val-214 coordinates pyruvate.

It belongs to the DapA family. Homotetramer; dimer of dimers.

Its subcellular location is the cytoplasm. The enzyme catalyses L-aspartate 4-semialdehyde + pyruvate = (2S,4S)-4-hydroxy-2,3,4,5-tetrahydrodipicolinate + H2O + H(+). Its pathway is amino-acid biosynthesis; L-lysine biosynthesis via DAP pathway; (S)-tetrahydrodipicolinate from L-aspartate: step 3/4. Catalyzes the condensation of (S)-aspartate-beta-semialdehyde [(S)-ASA] and pyruvate to 4-hydroxy-tetrahydrodipicolinate (HTPA). The polypeptide is 4-hydroxy-tetrahydrodipicolinate synthase (Parasynechococcus marenigrum (strain WH8102)).